The sequence spans 145 residues: uncharacterized protein (145 aa).

This sequence belongs to the methyltransferase superfamily.

Functionally, probable methyltransferase. This is an uncharacterized protein from Schizosaccharomyces pombe (strain 972 / ATCC 24843) (Fission yeast).